The chain runs to 525 residues: Peptide chain release factor 3 (525 aa).

Residues 9 to 276 (AKRRTFAIIS…GFTRYAPAPQ (268 aa)) form the tr-type G domain. GTP-binding positions include 18 to 25 (SHPDAGKT), 86 to 90 (DTPGH), and 140 to 143 (NKFD).

The protein belongs to the TRAFAC class translation factor GTPase superfamily. Classic translation factor GTPase family. PrfC subfamily.

The protein localises to the cytoplasm. Increases the formation of ribosomal termination complexes and stimulates activities of RF-1 and RF-2. It binds guanine nucleotides and has strong preference for UGA stop codons. It may interact directly with the ribosome. The stimulation of RF-1 and RF-2 is significantly reduced by GTP and GDP, but not by GMP. The sequence is that of Peptide chain release factor 3 from Francisella tularensis subsp. tularensis (strain FSC 198).